The following is a 313-amino-acid chain: Protoheme IX farnesyltransferase (313 aa).

A run of 8 helical transmembrane segments spans residues 32 to 52, 53 to 73, 120 to 140, 153 to 173, 180 to 200, 226 to 246, 248 to 268, and 284 to 304; these read VMSL…GDFH, PVLA…AGAL, VLVN…YVVI, IVIG…AVTG, LLLF…LALF, ILLY…LGYF, AVYG…AIRV, and LFKF…IEVV.

It belongs to the UbiA prenyltransferase family. Protoheme IX farnesyltransferase subfamily.

It is found in the cell inner membrane. It carries out the reaction heme b + (2E,6E)-farnesyl diphosphate + H2O = Fe(II)-heme o + diphosphate. The protein operates within porphyrin-containing compound metabolism; heme O biosynthesis; heme O from protoheme: step 1/1. Converts heme B (protoheme IX) to heme O by substitution of the vinyl group on carbon 2 of heme B porphyrin ring with a hydroxyethyl farnesyl side group. The sequence is that of Protoheme IX farnesyltransferase from Rhodopseudomonas palustris (strain BisB5).